A 278-amino-acid polypeptide reads, in one-letter code: Cytoplasmic envelopment protein 1 (278 aa).

It belongs to the herpesviridae cytoplasmic envelopment protein 1 family. Interacts with BSRF1 tegument protein; the BBRF2-BSRF1 complexes oligomerize and might play a role in tethering the viral nucleocapsids to the host Golgi membrane during secondary envelopment.

The protein localises to the virion. The protein resides in the virion tegument. It localises to the host cytoplasm. Its subcellular location is the host Golgi apparatus. Functionally, plays a critical role in cytoplasmic virus egress. Participates in the final step of tegumentation and envelope acquisition within the host cytoplasm. This Homo sapiens (Human) protein is Cytoplasmic envelopment protein 1.